We begin with the raw amino-acid sequence, 424 residues long: Argininosuccinate synthase (424 aa).

ATP-binding positions include 9–17 (AYSGGLDTS) and Ala-35. The L-citrulline site is built by Tyr-86 and Ser-91. 114–122 (SHGATGKGN) provides a ligand contact to ATP. L-aspartate-binding residues include Thr-118, Asn-122, and Asp-123. Asn-122 serves as a coordination point for L-citrulline. Positions 126, 179, 188, 269, and 281 each coordinate L-citrulline.

This sequence belongs to the argininosuccinate synthase family. Homotetramer.

The catalysed reaction is L-citrulline + L-aspartate + ATP = 2-(N(omega)-L-arginino)succinate + AMP + diphosphate + H(+). The protein operates within amino-acid biosynthesis; L-arginine biosynthesis; L-arginine from L-ornithine and carbamoyl phosphate: step 2/3. It functions in the pathway nitrogen metabolism; urea cycle; (N(omega)-L-arginino)succinate from L-aspartate and L-citrulline: step 1/1. The protein is Argininosuccinate synthase of Anopheles gambiae (African malaria mosquito).